Consider the following 435-residue polypeptide: Salicylate hydroxylase (435 aa).

FAD is bound at residue Arg12–Glu41.

Requires FAD as cofactor.

It catalyses the reaction salicylate + NADH + O2 + 2 H(+) = catechol + CO2 + NAD(+) + H2O. Its pathway is aromatic compound metabolism; naphthalene degradation. This is Salicylate hydroxylase (nahG) from Pseudomonas putida (Arthrobacter siderocapsulatus).